Consider the following 347-residue polypeptide: Eukaryotic translation initiation factor 3 subunit I (347 aa).

5 WD repeats span residues 8 to 47 (GHER…RLGT), 50 to 89 (DHSG…AVHS), 150 to 190 (EQAT…VQAK), 192 to 233 (IHEK…KTYK), and 289 to 328 (GHFG…FDFK).

It belongs to the eIF-3 subunit I family. Component of the eukaryotic translation initiation factor 3 (eIF-3) complex.

Its subcellular location is the cytoplasm. Component of the eukaryotic translation initiation factor 3 (eIF-3) complex, which is involved in protein synthesis of a specialized repertoire of mRNAs and, together with other initiation factors, stimulates binding of mRNA and methionyl-tRNAi to the 40S ribosome. The eIF-3 complex specifically targets and initiates translation of a subset of mRNAs involved in cell proliferation. This chain is Eukaryotic translation initiation factor 3 subunit I, found in Kluyveromyces lactis (strain ATCC 8585 / CBS 2359 / DSM 70799 / NBRC 1267 / NRRL Y-1140 / WM37) (Yeast).